A 192-amino-acid chain; its full sequence is UPF0312 protein Psyr_0457 (192 aa).

The first 23 residues, 1 to 23 (MLKKSLAALALGTALLSAGQAMA), serve as a signal peptide directing secretion.

Belongs to the UPF0312 family. Type 1 subfamily.

The protein localises to the periplasm. The chain is UPF0312 protein Psyr_0457 from Pseudomonas syringae pv. syringae (strain B728a).